Here is a 427-residue protein sequence, read N- to C-terminus: Serine hydroxymethyltransferase (427 aa).

Residues Leu-122 and 126-128 (GHL) contribute to the (6S)-5,6,7,8-tetrahydrofolate site. At Lys-231 the chain carries N6-(pyridoxal phosphate)lysine. 355-357 (SPF) contributes to the (6S)-5,6,7,8-tetrahydrofolate binding site.

This sequence belongs to the SHMT family. Homodimer. The cofactor is pyridoxal 5'-phosphate.

It is found in the cytoplasm. The enzyme catalyses (6R)-5,10-methylene-5,6,7,8-tetrahydrofolate + glycine + H2O = (6S)-5,6,7,8-tetrahydrofolate + L-serine. It participates in one-carbon metabolism; tetrahydrofolate interconversion. Its pathway is amino-acid biosynthesis; glycine biosynthesis; glycine from L-serine: step 1/1. In terms of biological role, catalyzes the reversible interconversion of serine and glycine with tetrahydrofolate (THF) serving as the one-carbon carrier. This reaction serves as the major source of one-carbon groups required for the biosynthesis of purines, thymidylate, methionine, and other important biomolecules. Also exhibits THF-independent aldolase activity toward beta-hydroxyamino acids, producing glycine and aldehydes, via a retro-aldol mechanism. In Synechococcus sp. (strain ATCC 27144 / PCC 6301 / SAUG 1402/1) (Anacystis nidulans), this protein is Serine hydroxymethyltransferase.